A 380-amino-acid chain; its full sequence is Queuine tRNA-ribosyltransferase (380 aa).

Catalysis depends on Asp-96, which acts as the Proton acceptor. Residues 96 to 100, Asp-150, Gln-193, and Gly-220 contribute to the substrate site; that span reads DSGGF. The tract at residues 251–257 is RNA binding; that stretch reads GVGAPDS. Catalysis depends on Asp-270, which acts as the Nucleophile. Residues 275–279 are RNA binding; important for wobble base 34 recognition; it reads TRIAR. The Zn(2+) site is built by Cys-308, Cys-310, Cys-313, and His-339.

It belongs to the queuine tRNA-ribosyltransferase family. In terms of assembly, homodimer. Within each dimer, one monomer is responsible for RNA recognition and catalysis, while the other monomer binds to the replacement base PreQ1. Zn(2+) serves as cofactor.

The catalysed reaction is 7-aminomethyl-7-carbaguanine + guanosine(34) in tRNA = 7-aminomethyl-7-carbaguanosine(34) in tRNA + guanine. Its pathway is tRNA modification; tRNA-queuosine biosynthesis. In terms of biological role, catalyzes the base-exchange of a guanine (G) residue with the queuine precursor 7-aminomethyl-7-deazaguanine (PreQ1) at position 34 (anticodon wobble position) in tRNAs with GU(N) anticodons (tRNA-Asp, -Asn, -His and -Tyr). Catalysis occurs through a double-displacement mechanism. The nucleophile active site attacks the C1' of nucleotide 34 to detach the guanine base from the RNA, forming a covalent enzyme-RNA intermediate. The proton acceptor active site deprotonates the incoming PreQ1, allowing a nucleophilic attack on the C1' of the ribose to form the product. After dissociation, two additional enzymatic reactions on the tRNA convert PreQ1 to queuine (Q), resulting in the hypermodified nucleoside queuosine (7-(((4,5-cis-dihydroxy-2-cyclopenten-1-yl)amino)methyl)-7-deazaguanosine). The protein is Queuine tRNA-ribosyltransferase of Streptococcus uberis (strain ATCC BAA-854 / 0140J).